The following is a 400-amino-acid chain: Phosphoglycerate kinase (400 aa).

Substrate contacts are provided by residues 22-24 (DFN), Arg38, 61-64 (HLGR), Arg119, and Arg152. ATP is bound by residues Lys205, Gly296, Glu327, and 353-356 (GGDT).

Belongs to the phosphoglycerate kinase family. Monomer.

It localises to the cytoplasm. It catalyses the reaction (2R)-3-phosphoglycerate + ATP = (2R)-3-phospho-glyceroyl phosphate + ADP. It functions in the pathway carbohydrate degradation; glycolysis; pyruvate from D-glyceraldehyde 3-phosphate: step 2/5. The polypeptide is Phosphoglycerate kinase (Campylobacter lari (strain RM2100 / D67 / ATCC BAA-1060)).